Reading from the N-terminus, the 568-residue chain is 2-succinyl-5-enolpyruvyl-6-hydroxy-3-cyclohexene-1-carboxylate synthase (568 aa).

It belongs to the TPP enzyme family. MenD subfamily. As to quaternary structure, homodimer. Mg(2+) is required as a cofactor. It depends on Mn(2+) as a cofactor. The cofactor is thiamine diphosphate.

It catalyses the reaction isochorismate + 2-oxoglutarate + H(+) = 5-enolpyruvoyl-6-hydroxy-2-succinyl-cyclohex-3-ene-1-carboxylate + CO2. It participates in quinol/quinone metabolism; 1,4-dihydroxy-2-naphthoate biosynthesis; 1,4-dihydroxy-2-naphthoate from chorismate: step 2/7. The protein operates within quinol/quinone metabolism; menaquinone biosynthesis. Its function is as follows. Catalyzes the thiamine diphosphate-dependent decarboxylation of 2-oxoglutarate and the subsequent addition of the resulting succinic semialdehyde-thiamine pyrophosphate anion to isochorismate to yield 2-succinyl-5-enolpyruvyl-6-hydroxy-3-cyclohexene-1-carboxylate (SEPHCHC). This is 2-succinyl-5-enolpyruvyl-6-hydroxy-3-cyclohexene-1-carboxylate synthase from Actinobacillus pleuropneumoniae serotype 3 (strain JL03).